The primary structure comprises 698 residues: SHC SH2 domain-binding protein 1 homolog B (698 aa).

PbH1 repeat units follow at residues 480 to 502, 503 to 524, and 532 to 554; these read CAEL…EIYP, GSKC…LIKD, and IPKI…VLVK.

Its subcellular location is the midbody. The protein localises to the cytoplasm. It localises to the cytoskeleton. It is found in the spindle. May play a role in signaling pathways governing cellular proliferation. The polypeptide is SHC SH2 domain-binding protein 1 homolog B (shcbp1-b) (Xenopus laevis (African clawed frog)).